Here is a 98-residue protein sequence, read N- to C-terminus: NADH-ubiquinone oxidoreductase chain 4L (98 aa).

Helical transmembrane passes span 1–21 (MALI…GLLL), 29–49 (SLLC…VMIL), and 61–81 (IVLL…LVMV).

The protein belongs to the complex I subunit 4L family. In terms of assembly, core subunit of respiratory chain NADH dehydrogenase (Complex I) which is composed of 45 different subunits.

The protein resides in the mitochondrion inner membrane. It catalyses the reaction a ubiquinone + NADH + 5 H(+)(in) = a ubiquinol + NAD(+) + 4 H(+)(out). Its function is as follows. Core subunit of the mitochondrial membrane respiratory chain NADH dehydrogenase (Complex I) which catalyzes electron transfer from NADH through the respiratory chain, using ubiquinone as an electron acceptor. Part of the enzyme membrane arm which is embedded in the lipid bilayer and involved in proton translocation. The polypeptide is NADH-ubiquinone oxidoreductase chain 4L (MT-ND4L) (Rhinolophus monoceros (Formosan lesser horseshoe bat)).